A 226-amino-acid chain; its full sequence is Putative uroporphyrinogen-III synthase (226 aa).

The protein belongs to the uroporphyrinogen-III synthase family.

The enzyme catalyses hydroxymethylbilane = uroporphyrinogen III + H2O. Its pathway is porphyrin-containing compound metabolism; protoporphyrin-IX biosynthesis; coproporphyrinogen-III from 5-aminolevulinate: step 3/4. Its function is as follows. Catalyzes cyclization of the linear tetrapyrrole, hydroxymethylbilane, to the macrocyclic uroporphyrinogen III. The sequence is that of Putative uroporphyrinogen-III synthase from Archaeoglobus fulgidus (strain ATCC 49558 / DSM 4304 / JCM 9628 / NBRC 100126 / VC-16).